Consider the following 231-residue polypeptide: Large ribosomal subunit protein uL1 (231 aa).

It belongs to the universal ribosomal protein uL1 family. Part of the 50S ribosomal subunit.

Functionally, binds directly to 23S rRNA. The L1 stalk is quite mobile in the ribosome, and is involved in E site tRNA release. In terms of biological role, protein L1 is also a translational repressor protein, it controls the translation of the L11 operon by binding to its mRNA. This chain is Large ribosomal subunit protein uL1, found in Janthinobacterium sp. (strain Marseille) (Minibacterium massiliensis).